Reading from the N-terminus, the 157-residue chain is Small ribosomal subunit protein uS7 (157 aa).

It belongs to the universal ribosomal protein uS7 family. Part of the 30S ribosomal subunit. Contacts proteins S9 and S11.

One of the primary rRNA binding proteins, it binds directly to 16S rRNA where it nucleates assembly of the head domain of the 30S subunit. Is located at the subunit interface close to the decoding center, probably blocks exit of the E-site tRNA. The protein is Small ribosomal subunit protein uS7 of Chlamydia trachomatis serovar L2 (strain ATCC VR-902B / DSM 19102 / 434/Bu).